The primary structure comprises 223 residues: Dephospho-CoA kinase (223 aa).

One can recognise a DPCK domain in the interval Val-3–Arg-204. Gly-11–Thr-16 contributes to the ATP binding site.

It belongs to the CoaE family.

It localises to the cytoplasm. It catalyses the reaction 3'-dephospho-CoA + ATP = ADP + CoA + H(+). It functions in the pathway cofactor biosynthesis; coenzyme A biosynthesis; CoA from (R)-pantothenate: step 5/5. Functionally, catalyzes the phosphorylation of the 3'-hydroxyl group of dephosphocoenzyme A to form coenzyme A. This is Dephospho-CoA kinase from Anaplasma marginale (strain St. Maries).